A 163-amino-acid chain; its full sequence is Cyclic pyranopterin monophosphate synthase (163 aa).

Substrate-binding positions include 78–80 and 116–117; these read LCH and ME. Residue D131 is part of the active site.

It belongs to the MoaC family. In terms of assembly, homohexamer; trimer of dimers.

It catalyses the reaction (8S)-3',8-cyclo-7,8-dihydroguanosine 5'-triphosphate = cyclic pyranopterin phosphate + diphosphate. It functions in the pathway cofactor biosynthesis; molybdopterin biosynthesis. Its function is as follows. Catalyzes the conversion of (8S)-3',8-cyclo-7,8-dihydroguanosine 5'-triphosphate to cyclic pyranopterin monophosphate (cPMP). This is Cyclic pyranopterin monophosphate synthase from Agrobacterium fabrum (strain C58 / ATCC 33970) (Agrobacterium tumefaciens (strain C58)).